Consider the following 146-residue polypeptide: Prepilin peptidase-dependent protein D (146 aa).

The propeptide at 1-6 (MDKQRG) is leader sequence. At phenylalanine 7 the chain carries N-methylphenylalanine. A helical membrane pass occupies residues 7-27 (FTLIELMVVIGIIAILSAIGI).

It belongs to the N-Me-Phe pilin family.

The protein resides in the fimbrium. It is found in the membrane. Its function is as follows. Major component of the type IV pilus (T4P) that plays a role in cell adhesion and motility. Not produced when grown under standard laboratory conditions. This Escherichia coli (strain K12) protein is Prepilin peptidase-dependent protein D (ppdD).